A 488-amino-acid chain; its full sequence is Calcium/calmodulin-dependent protein kinase type II subunit delta (488 aa).

The residue at position 2 (Ala2) is an N-acetylalanine. The region spanning 14 to 272 (YQLFEELGKG…ASEALKHPWI (259 aa)) is the Protein kinase domain. Residues 20 to 28 (LGKGAFSVV) and Lys43 each bind ATP. Residue Asp136 is the Proton acceptor of the active site. An autoinhibitory domain region spans residues 283 to 292 (HRQETVDCLK). Thr287 carries the phosphothreonine; by autocatalysis modification. Residues 291–301 (LKKFNARRKLK) form a calmodulin-binding region. Thr306 and Thr307 each carry phosphothreonine; by autocatalysis. The residue at position 315 (Ser315) is a Phosphoserine. Lys317 is subject to N6-acetyllysine. 2 positions are modified to phosphoserine: Ser318 and Ser340. The segment at 325 to 350 (GVKKRKSSSSVQMMESTESSNTTIED) is disordered. Polar residues predominate over residues 332 to 347 (SSSVQMMESTESSNTT). Position 341 is a phosphothreonine (Thr341). Position 343 is a phosphoserine (Ser343). A phosphothreonine mark is found at Thr346 and Thr347. Phosphoserine is present on Ser414.

The protein belongs to the protein kinase superfamily. CAMK Ser/Thr protein kinase family. CaMK subfamily. CAMK2 is composed of 4 different chains: alpha (CAMK2A), beta (CAMK2B), gamma (CAMK2G), and delta (CAMK2D). The different isoforms assemble into homo- or heteromultimeric holoenzymes composed of 12 subunits with two hexameric rings stacked one on top of the other. Interacts with RRAD and CACNB2. Autophosphorylation of Thr-287 following activation by Ca(2+)/calmodulin. Phosphorylation of Thr-287 locks the kinase into an activated state.

The protein localises to the cell membrane. Its subcellular location is the sarcolemma. It is found in the sarcoplasmic reticulum membrane. It carries out the reaction L-seryl-[protein] + ATP = O-phospho-L-seryl-[protein] + ADP + H(+). It catalyses the reaction L-threonyl-[protein] + ATP = O-phospho-L-threonyl-[protein] + ADP + H(+). Activated by Ca(2+)/calmodulin. Binding of calmodulin results in conformational change that relieves intrasteric autoinhibition and allows autophosphorylation of Thr-287 which turns the kinase in a constitutively active form and confers to the kinase a Ca(2+)-independent activity. Functionally, calcium/calmodulin-dependent protein kinase involved in the regulation of Ca(2+) homeostatis and excitation-contraction coupling (ECC) in heart by targeting ion channels, transporters and accessory proteins involved in Ca(2+) influx into the myocyte, Ca(2+) release from the sarcoplasmic reticulum (SR), SR Ca(2+) uptake and Na(+) and K(+) channel transport. Targets also transcription factors and signaling molecules to regulate heart function. In its activated form, is involved in the pathogenesis of dilated cardiomyopathy and heart failure. Contributes to cardiac decompensation and heart failure by regulating SR Ca(2+) release via direct phosphorylation of RYR2 Ca(2+) channel on 'Ser-2808'. In the nucleus, phosphorylates the MEF2 repressor HDAC4, promoting its nuclear export and binding to 14-3-3 protein, and expression of MEF2 and genes involved in the hypertrophic program. Is essential for left ventricular remodeling responses to myocardial infarction. In pathological myocardial remodeling acts downstream of the beta adrenergic receptor signaling cascade to regulate key proteins involved in ECC. Regulates Ca(2+) influx to myocytes by binding and phosphorylating the L-type Ca(2+) channel subunit beta-2 CACNB2. In addition to Ca(2+) channels, can target and regulate the cardiac sarcolemmal Na(+) channel Nav1.5/SCN5A and the K+ channel Kv4.3/KCND3, which contribute to arrhythmogenesis in heart failure. Phosphorylates phospholamban (PLN/PLB), an endogenous inhibitor of SERCA2A/ATP2A2, contributing to the enhancement of SR Ca(2+) uptake that may be important in frequency-dependent acceleration of relaxation (FDAR) and maintenance of contractile function during acidosis. May participate in the modulation of skeletal muscle function in response to exercise, by regulating SR Ca(2+) transport through phosphorylation of PLN/PLB and triadin, a ryanodine receptor-coupling factor. In response to interferon-gamma (IFN-gamma) stimulation, catalyzes phosphorylation of STAT1, stimulating the JAK-STAT signaling pathway. The chain is Calcium/calmodulin-dependent protein kinase type II subunit delta (CAMK2D) from Bos taurus (Bovine).